A 180-amino-acid chain; its full sequence is Sec-independent protein translocase protein TatB (180 aa).

The helical transmembrane segment at 1–21 threads the bilayer; sequence MFDIGWSELLVIGVVALIAIG. A disordered region spans residues 77–180; the sequence is TRGDLMTRLT…DQTARGAKAS (104 aa). The segment covering 105 to 129 has biased composition (low complexity); sequence ADKPSVSSDAASASGSAAPEAGAAE.

Belongs to the TatB family. The Tat system comprises two distinct complexes: a TatABC complex, containing multiple copies of TatA, TatB and TatC subunits, and a separate TatA complex, containing only TatA subunits. Substrates initially bind to the TatABC complex, which probably triggers association of the separate TatA complex to form the active translocon.

The protein localises to the cell inner membrane. In terms of biological role, part of the twin-arginine translocation (Tat) system that transports large folded proteins containing a characteristic twin-arginine motif in their signal peptide across membranes. Together with TatC, TatB is part of a receptor directly interacting with Tat signal peptides. TatB may form an oligomeric binding site that transiently accommodates folded Tat precursor proteins before their translocation. The polypeptide is Sec-independent protein translocase protein TatB (Nitrobacter winogradskyi (strain ATCC 25391 / DSM 10237 / CIP 104748 / NCIMB 11846 / Nb-255)).